A 379-amino-acid polypeptide reads, in one-letter code: Cytochrome b (379 aa).

The next 4 helical transmembrane spans lie at 33-53 (FGSL…FLAM), 77-98 (WLIR…FIHV), 113-133 (WNIG…GYVL), and 178-198 (FFAF…VHLL). Residues His83 and His97 each contribute to the heme b site. Residues His182 and His196 each contribute to the heme b site. His201 provides a ligand contact to a ubiquinone. 4 helical membrane passes run 226 to 246 (IKDL…TLFF), 288 to 308 (LGGV…PLLN), 320 to 340 (VTQV…WIGG), and 347 to 367 (FTMI…ILIP).

The protein belongs to the cytochrome b family. As to quaternary structure, the cytochrome bc1 complex contains 11 subunits: 3 respiratory subunits (MT-CYB, CYC1 and UQCRFS1), 2 core proteins (UQCRC1 and UQCRC2) and 6 low-molecular weight proteins (UQCRH/QCR6, UQCRB/QCR7, UQCRQ/QCR8, UQCR10/QCR9, UQCR11/QCR10 and a cleavage product of UQCRFS1). This cytochrome bc1 complex then forms a dimer. Heme b serves as cofactor.

It is found in the mitochondrion inner membrane. In terms of biological role, component of the ubiquinol-cytochrome c reductase complex (complex III or cytochrome b-c1 complex) that is part of the mitochondrial respiratory chain. The b-c1 complex mediates electron transfer from ubiquinol to cytochrome c. Contributes to the generation of a proton gradient across the mitochondrial membrane that is then used for ATP synthesis. The sequence is that of Cytochrome b (MT-CYB) from Akodon subfuscus (Puno grass mouse).